The following is a 562-amino-acid chain: Protein wntless (562 aa).

At 1-13 the chain is on the cytoplasmic side; that stretch reads MSGTILENLSGRK. The helical transmembrane segment at 14 to 34 threads the bilayer; sequence LSILVASLLLCQVFCFLLGGL. Residues 35-239 lie on the Lumenal side of the membrane; it reads YAPLPAGHVT…AIHQNGGFTQ (205 aa). Residue N58 is glycosylated (N-linked (GlcNAc...) asparagine). The helical transmembrane segment at 240 to 260 threads the bilayer; that stretch reads IWLMLKTVLFPFVVGIMIWFW. The Cytoplasmic segment spans residues 261-270; sequence RRVHLLQRSP. A helical transmembrane segment spans residues 271–291; that stretch reads ALLEYMLIYLGGALTFLNLPL. Topologically, residues 292 to 311 are lumenal; it reads EYLSLVVEMPYMLLLSDIRQ. Residues 312-332 form a helical membrane-spanning segment; it reads GIFYAMLLSFWLVFAGEHMLI. Over 333-344 the chain is Cytoplasmic; sequence QDAPNKSTIRSR. The chain crosses the membrane as a helical span at residues 345 to 365; sequence YWKHLSAVVVGCISLFVFDIC. Over 366 to 390 the chain is Lumenal; sequence ERGVQLRNPFYSIWTTPLGAKVAMT. The helical transmembrane segment at 391 to 411 threads the bilayer; that stretch reads FIILAGVSAAIYFLFLCYMIW. The Cytoplasmic portion of the chain corresponds to 412–441; sequence KVFRNIGDKRTSLPSMSQARRLHYEGLIYR. Residues 442–462 form a helical membrane-spanning segment; sequence FKFLMLATLLCAALTVAGFIM. Residues 463–482 are Lumenal-facing; that stretch reads GQMAEGQWQWNDNVEIQLTS. Residues 483–503 traverse the membrane as a helical segment; sequence AFLTGVYGMWNIYIFALLILY. Residues 504–562 are Cytoplasmic-facing; sequence APSHKQWPTMHHSDETTQSNENIVASAASEEIEFSHLPSDSNPSEISSLTSFTRKVAFD. The interval 539 to 562 is disordered; it reads HLPSDSNPSEISSLTSFTRKVAFD. The segment covering 541–556 has biased composition (polar residues); it reads PSDSNPSEISSLTSFT.

The protein belongs to the wntless family. As to quaternary structure, interacts with wg; in the Golgi. Interacts with Vps35, a component of the retromer complex; wls stability is regulated by Vps35.

The protein resides in the presynaptic cell membrane. It is found in the postsynaptic cell membrane. The protein localises to the cell membrane. Its subcellular location is the endoplasmic reticulum membrane. It localises to the endosome membrane. The protein resides in the golgi apparatus membrane. Its function is as follows. A segment polarity gene required for wingless (wg)-dependent patterning processes, acting in both wg-sending cells and wg-target cells. In non-neuronal cells wls directs wg secretion. The wls traffic loop encompasses the Golgi, the cell surface, an endocytic compartment and a retrograde route leading back to the Golgi, and involves clathrin-mediated endocytosis and the retromer complex (a conserved protein complex consisting of Vps35 and Vps26). In neuronal cells (the larval motorneuron NMJ), the wg signal moves across the synapse via the release of wls-containing exosome-like vesicles. Postsynaptic wls is required for the trafficking of fz2 through the fz2-interacting protein Grip. The protein is Protein wntless of Drosophila ananassae (Fruit fly).